The primary structure comprises 259 residues: Hydroxyacylglutathione hydrolase (259 aa).

Residues H56, H58, D60, H61, H112, D133, and H171 each coordinate Zn(2+).

The protein belongs to the metallo-beta-lactamase superfamily. Glyoxalase II family. In terms of assembly, monomer. Zn(2+) serves as cofactor.

It carries out the reaction an S-(2-hydroxyacyl)glutathione + H2O = a 2-hydroxy carboxylate + glutathione + H(+). The protein operates within secondary metabolite metabolism; methylglyoxal degradation; (R)-lactate from methylglyoxal: step 2/2. Thiolesterase that catalyzes the hydrolysis of S-D-lactoyl-glutathione to form glutathione and D-lactic acid. This Pseudomonas putida (strain GB-1) protein is Hydroxyacylglutathione hydrolase.